Consider the following 479-residue polypeptide: MLWETIVEENNCSMDCNISNNTSSSSSINKMSGSRRARRSLELMSMDQEELSFYDDDVVPQDQQRSASPELMGLLSPEGSPQRFQIVRQPKILPAMGVSSDHTPARSFRIFNSLSSTCSMESSMDDEYMELFEMESQSQQTALGFPSGLNSLISGQIKEQPAAKSPAGLSMRRPSVRRCLSMTESNTNSTTTPPPKTPETARDCFKRPEPPASANCSPIQSKRHRCAAVEKENCPAPSPLSQVTISHPPPLRKCMSLNDAEIMSALARSENRNEPELIGDFSKAYALPLMEGRHRDLKSISSETVARLLKGEFSDKVASYRIIDCRYPYEFEGGHIEGAKNLYTTEQILDEFLTVQQTELQQQQNAESGHKRNIIIFHCEFSSERGPKMSRFLRNLDRERNTNAYPALHYPEIYLLHNGYKEFFESHVELCEPHAYRTMLDPAYNEAYRHFRAKSKSWNGDGLGGATGRLKKSRSRLML.

The interval 182–218 is disordered; the sequence is MTESNTNSTTTPPPKTPETARDCFKRPEPPASANCSP. The segment covering 199-209 has biased composition (basic and acidic residues); it reads ETARDCFKRPE. In terms of domain architecture, Rhodanese spans 316-432; that stretch reads KVASYRIIDC…FFESHVELCE (117 aa). The active site involves Cys-379. At Ser-455 the chain carries Phosphoserine.

The protein belongs to the MPI phosphatase family.

It catalyses the reaction O-phospho-L-tyrosyl-[protein] + H2O = L-tyrosyl-[protein] + phosphate. In terms of biological role, this protein functions as a dosage-dependent inducer in mitotic control. It is a tyrosine protein phosphatase required for progression of the cell cycle. It may directly dephosphorylate Cdk1 and activate the Cdk1 activity. This Drosophila melanogaster (Fruit fly) protein is M-phase inducer phosphatase (stg).